Here is a 782-residue protein sequence, read N- to C-terminus: Probable methionine--tRNA ligase, cytoplasmic (782 aa).

Residues 231–241 (PYVNNVPHLGN) carry the 'HIGH' region motif. The 'KMSKS' region motif lies at 551–555 (KFSKS).

This sequence belongs to the class-I aminoacyl-tRNA synthetase family.

It localises to the cytoplasm. It catalyses the reaction tRNA(Met) + L-methionine + ATP = L-methionyl-tRNA(Met) + AMP + diphosphate. The polypeptide is Probable methionine--tRNA ligase, cytoplasmic (rar1) (Schizosaccharomyces pombe (strain 972 / ATCC 24843) (Fission yeast)).